A 619-amino-acid polypeptide reads, in one-letter code: Protein Atg16l2 (619 aa).

Residues 57–78 are disordered; sequence LQPEPNSVTPTTHQGPWEESEL. Polar residues predominate over residues 60 to 70; sequence EPNSVTPTTHQ. Residues 116 to 227 adopt a coiled-coil conformation; that stretch reads AALGTLESEL…QARVSQELKK (112 aa). 7 WD repeats span residues 334–373, 378–417, 420–454, 455–498, 500–539, 546–585, and 589–619; these read AHLS…LEAN, GAGG…SKET, GHKD…LGRA, YCSR…CTQV, PVQG…IRQV, KCGS…LESR, and PHCA…VLWQ.

The protein belongs to the WD repeat ATG16 family. Homooligomer. Heterooligomer with ATG16L1. Interacts with ATG5. Self-oligomerizes to form a 800-kDa complex composed of ATG12-ATG5 and ATG16L2. Interacts with RAB33B.

It is found in the cytoplasm. It localises to the cytosol. May play a role in regulating epithelial homeostasis in an ATG16L1-dependent manner. In Homo sapiens (Human), this protein is Protein Atg16l2 (ATG16L2).